A 361-amino-acid chain; its full sequence is MLYLLSELSGVFSPFNVFRYITFRTGGALFTAGLFVFWFGPWIISLLRLRQGKGQPIREDGPQTHLLTKRGTPTMGGLMILAGLLVAVLLWANPRNSYVWITVVVTLGFGAIGFYDDYLKVTKQSHKGFSGKFRLGLEALIAVAACVAVAEYSAPGLAYRLAFPVFKDAIVNLGLFWILFASFVIVGAGNAVNITDGLDGLAIVPVMIAAATFGIIAYLVGNVIYASYLQVNYVPGTGELAVVCGALIGAGLGFLWFNAPPAQIFMGDTGSLALGGLLGTVAVATKHEIVLAVVGGLFVLEIASVIIQVASFKLTGKRVFRMAPIHHHFEQKGWKEPQVVIRFWIIAVVLALLGLATLKLR.

The next 10 helical transmembrane spans lie at 27–47 (GALFTAGLFVFWFGPWIISLL), 72–92 (TPTMGGLMILAGLLVAVLLWA), 99–119 (VWITVVVTLGFGAIGFYDDYL), 139–159 (ALIAVAACVAVAEYSAPGLAY), 169–189 (AIVNLGLFWILFASFVIVGAG), 200–220 (GLAIVPVMIAAATFGIIAYLV), 240–260 (LAVVCGALIGAGLGFLWFNAP), 264–284 (IFMGDTGSLALGGLLGTVAVA), 289–309 (IVLAVVGGLFVLEIASVIIQV), and 338–358 (QVVIRFWIIAVVLALLGLATL).

The protein belongs to the glycosyltransferase 4 family. MraY subfamily. Requires Mg(2+) as cofactor.

The protein localises to the cell inner membrane. The enzyme catalyses UDP-N-acetyl-alpha-D-muramoyl-L-alanyl-gamma-D-glutamyl-meso-2,6-diaminopimeloyl-D-alanyl-D-alanine + di-trans,octa-cis-undecaprenyl phosphate = di-trans,octa-cis-undecaprenyl diphospho-N-acetyl-alpha-D-muramoyl-L-alanyl-D-glutamyl-meso-2,6-diaminopimeloyl-D-alanyl-D-alanine + UMP. Its pathway is cell wall biogenesis; peptidoglycan biosynthesis. In terms of biological role, catalyzes the initial step of the lipid cycle reactions in the biosynthesis of the cell wall peptidoglycan: transfers peptidoglycan precursor phospho-MurNAc-pentapeptide from UDP-MurNAc-pentapeptide onto the lipid carrier undecaprenyl phosphate, yielding undecaprenyl-pyrophosphoryl-MurNAc-pentapeptide, known as lipid I. This chain is Phospho-N-acetylmuramoyl-pentapeptide-transferase, found in Methylobacterium nodulans (strain LMG 21967 / CNCM I-2342 / ORS 2060).